A 175-amino-acid polypeptide reads, in one-letter code: Snake venom metalloproteinase BpMP-1 (175 aa).

The region spanning 1–175 (YIELAVVADH…KHNPQCILNK (175 aa)) is the Peptidase M12B domain. 2 residues coordinate Ca(2+): E3 and D74. 3 disulfide bridges follow: C98/C171, C131/C155, and C133/C138. Zn(2+) is bound at residue H117. The active site involves E118. Zn(2+) is bound by residues H121 and H127. Ca(2+)-binding residues include C171 and N174.

This sequence belongs to the venom metalloproteinase (M12B) family. P-I subfamily. As to quaternary structure, monomer. It depends on Zn(2+) as a cofactor. Expressed by the venom gland.

It is found in the secreted. Inhibited by EDTA, 1,10-phenanthroline and beta-mercaptoethanol. Not inhibited by the serine protease inhibitors aprotinin and benzamidin. In terms of biological role, non-hemorrhagic snake venom zinc metalloprotease that hydrolyzes the Aalpha-chain of fibrinogen, more slowly the Bbeta-chain and shows no effect on the gamma chain. Has no coagulant activity on bovine plasma and fibrinogen. The chain is Snake venom metalloproteinase BpMP-1 from Bothrops pauloensis (Neuwied's lancehead).